A 276-amino-acid chain; its full sequence is Undecaprenyl-diphosphatase (276 aa).

A run of 6 helical transmembrane segments spans residues 43-63 (RAMA…VWEF), 85-105 (INLL…ADLI), 109-129 (LFNP…MLWA), 184-204 (ATEF…VYSG), 218-238 (VFAI…KGLL), and 254-274 (IAFG…WTAA).

This sequence belongs to the UppP family.

It localises to the cell inner membrane. The enzyme catalyses di-trans,octa-cis-undecaprenyl diphosphate + H2O = di-trans,octa-cis-undecaprenyl phosphate + phosphate + H(+). Its function is as follows. Catalyzes the dephosphorylation of undecaprenyl diphosphate (UPP). Confers resistance to bacitracin. This is Undecaprenyl-diphosphatase from Pseudomonas fluorescens (strain ATCC BAA-477 / NRRL B-23932 / Pf-5).